The sequence spans 361 residues: Probable dual-specificity RNA methyltransferase RlmN (361 aa).

The Proton acceptor role is filled by Glu91. The Radical SAM core domain maps to 97-329 (QHYGLSVCVT…KKKGGNCVVR (233 aa)). Cysteines 104 and 340 form a disulfide. [4Fe-4S] cluster contacts are provided by Cys111, Cys115, and Cys118. S-adenosyl-L-methionine contacts are provided by residues 163 to 164 (GE), Ser195, 218 to 220 (SLH), and Asn296. The active-site S-methylcysteine intermediate is Cys340.

Belongs to the radical SAM superfamily. RlmN family. Requires [4Fe-4S] cluster as cofactor.

The protein resides in the cytoplasm. The enzyme catalyses adenosine(2503) in 23S rRNA + 2 reduced [2Fe-2S]-[ferredoxin] + 2 S-adenosyl-L-methionine = 2-methyladenosine(2503) in 23S rRNA + 5'-deoxyadenosine + L-methionine + 2 oxidized [2Fe-2S]-[ferredoxin] + S-adenosyl-L-homocysteine. It carries out the reaction adenosine(37) in tRNA + 2 reduced [2Fe-2S]-[ferredoxin] + 2 S-adenosyl-L-methionine = 2-methyladenosine(37) in tRNA + 5'-deoxyadenosine + L-methionine + 2 oxidized [2Fe-2S]-[ferredoxin] + S-adenosyl-L-homocysteine. In terms of biological role, specifically methylates position 2 of adenine 2503 in 23S rRNA and position 2 of adenine 37 in tRNAs. This is Probable dual-specificity RNA methyltransferase RlmN from Streptococcus pneumoniae (strain P1031).